The primary structure comprises 361 residues: G-protein coupled receptor 183 (361 aa).

Residues 1–31 (MDIQMANNFTPPSATPQGNDCDLYAHHSTAR) are Extracellular-facing. A helical membrane pass occupies residues 32-57 (IVMPLHYSLVFIIGLVGNLLALVVIV). Over 58–77 (QNRKKINSTTLYSTNLVISD) the chain is Cytoplasmic. Residues 78–95 (ILFTTALPTRIAYYAMGF) form a helical membrane-spanning segment. Position 87 (R87) interacts with 7alpha,25-dihydroxycholesterol. At 96-105 (DWRIGDALCR) the chain is on the extracellular side. An intrachain disulfide couples C104 to C181. A helical membrane pass occupies residues 106-127 (ITALVFYINTYAGVNFMTCLSI). Residues Y112 and Y116 each coordinate 7alpha,25-dihydroxycholesterol. Residues 126–134 (SIDRFIAVV) form an interaction with G proteins region. Topologically, residues 128 to 149 (DRFIAVVHPLRYNKIKRIEHAK) are cytoplasmic. A helical transmembrane segment spans residues 150 to 168 (GVCIFVWILVFAQTLPLLI). The Extracellular portion of the chain corresponds to 169 to 192 (NPMSKQEAERITCMEYPNFEETKS). The chain crosses the membrane as a helical span at residues 193-215 (LPWILLGACFIGYVLPLIIILIC). Residues 216-241 (YSQICCKLFRTAKQNPLTEKSGVNKK) are Cytoplasmic-facing. The chain crosses the membrane as a helical span at residues 242–265 (ALNTIILIIVVFVLCFTPYHVAII). Residue Y260 participates in 7alpha,25-dihydroxycholesterol binding. At 266 to 287 (QHMIKKLRFSNFLECSQRHSFQ) the chain is on the extracellular side. A helical transmembrane segment spans residues 288–312 (ISLHFTVCLMNFNCCMDPFIYFFAC). The Cytoplasmic portion of the chain corresponds to 313–361 (KGYKRKVMRMLKRQVSVSISSAVKSAPEENSREMTETQMMIHSKSSNGK). A Phosphoserine modification is found at S328. Positions 340 to 361 (EENSREMTETQMMIHSKSSNGK) are disordered. The span at 348-361 (ETQMMIHSKSSNGK) shows a compositional bias: polar residues.

The protein belongs to the G-protein coupled receptor 1 family. Homodimer and heterodimer. Heterodimerizes with CXCR5; leading to modulate the interaction between of CXCL13 and CXCR5. In terms of tissue distribution, expressed abundantly in lymphoid tissues such as spleen and lymph node, and in B- and T-lymphocytes. Also highly expressed in lung, heart and gastrointestinal tract, and weakly expressed in the urogenital system and brain. Expressed in astrocytes.

Its subcellular location is the cell membrane. G-protein coupled receptor expressed in lymphocytes that acts as a chemotactic receptor for B-cells, T-cells, splenic dendritic cells, monocytes/macrophages and astrocytes. Receptor for oxysterol 7-alpha,25-dihydroxycholesterol (7-alpha,25-OHC) and other related oxysterols. Mediates cell positioning and movement of a number of cells by binding the 7-alpha,25-OHC ligand that forms a chemotactic gradient. Binding of 7-alpha,25-OHC mediates the correct localization of B-cells during humoral immune responses. Guides B-cell movement along the B-cell zone-T-cell zone boundary and later to interfollicular and outer follicular regions. Its specific expression during B-cell maturation helps position B-cells appropriately for mounting T-dependent antibody responses. Collaborates with CXCR5 to mediate B-cell migration; probably by forming a heterodimer with CXCR5 that affects the interaction between of CXCL13 and CXCR5. Also acts as a chemotactic receptor for some T-cells upon binding to 7-alpha,25-OHC ligand. Promotes follicular helper T (Tfh) cells differentiation by positioning activated T-cells at the follicle-T-zone interface, promoting contact of newly activated CD4 T-cells with activated dendritic cells and exposing them to Tfh-cell-promoting inducible costimulator (ICOS) ligand. Expression in splenic dendritic cells is required for their homeostasis, localization and ability to induce B- and T-cell responses: GPR183 acts as a chemotactic receptor in dendritic cells that mediates the accumulation of CD4(+) dendritic cells in bridging channels. Regulates migration of astrocytes and is involved in communication between astrocytes and macrophages. Promotes osteoclast precursor migration to bone surfaces. Signals constitutively through G(i)-alpha, but not G(s)-alpha or G(q)-alpha. Signals constitutively also via MAPK1/3 (ERK1/2). This is G-protein coupled receptor 183 from Homo sapiens (Human).